Consider the following 432-residue polypeptide: Enolase (432 aa).

(2R)-2-phosphoglycerate is bound at residue Q163. E205 (proton donor) is an active-site residue. 3 residues coordinate Mg(2+): D242, E288, and D315. The (2R)-2-phosphoglycerate site is built by K340, R369, S370, and K391. The active-site Proton acceptor is the K340.

It belongs to the enolase family. Mg(2+) is required as a cofactor.

The protein localises to the cytoplasm. Its subcellular location is the secreted. The protein resides in the cell surface. The enzyme catalyses (2R)-2-phosphoglycerate = phosphoenolpyruvate + H2O. It participates in carbohydrate degradation; glycolysis; pyruvate from D-glyceraldehyde 3-phosphate: step 4/5. In terms of biological role, catalyzes the reversible conversion of 2-phosphoglycerate (2-PG) into phosphoenolpyruvate (PEP). It is essential for the degradation of carbohydrates via glycolysis. In Enterococcus faecalis (strain ATCC 700802 / V583), this protein is Enolase.